We begin with the raw amino-acid sequence, 458 residues long: Mannan endo-1,6-alpha-mannosidase DFG5 (458 aa).

A signal peptide spans 1-26 (MIVNISAKMILSICFTFLSFFKATHA). N-linked (GlcNAc...) asparagine glycosylation is found at N89, N114, N138, N208, N231, N245, N270, N273, and N417. A disordered region spans residues 399–418 (PYKEDNGGTSKGDANAGMNS). G437 is lipidated: GPI-anchor amidated glycine. The propeptide at 438 to 458 (AAIITAVILSVLTGGAVWMLF) is removed in mature form.

It belongs to the glycosyl hydrolase 76 family. In terms of processing, N-glycosylated.

It is found in the cell membrane. It catalyses the reaction Random hydrolysis of (1-&gt;6)-alpha-D-mannosidic linkages in unbranched (1-&gt;6)-mannans.. Functionally, required for normal synthesis of the cell wall. In Saccharomyces cerevisiae (strain ATCC 204508 / S288c) (Baker's yeast), this protein is Mannan endo-1,6-alpha-mannosidase DFG5 (DFG5).